The primary structure comprises 180 residues: Riboflavin kinase (180 aa).

Mg(2+) contacts are provided by threonine 40 and asparagine 42. Glutamate 117 serves as the catalytic Nucleophile.

The protein belongs to the flavokinase family. It depends on Zn(2+) as a cofactor. Mg(2+) is required as a cofactor.

It carries out the reaction riboflavin + ATP = FMN + ADP + H(+). It participates in cofactor biosynthesis; FMN biosynthesis; FMN from riboflavin (ATP route): step 1/1. Functionally, catalyzes the phosphorylation of riboflavin (vitamin B2) to form flavin mononucleotide (FMN) coenzyme. This Meyerozyma guilliermondii (strain ATCC 6260 / CBS 566 / DSM 6381 / JCM 1539 / NBRC 10279 / NRRL Y-324) (Yeast) protein is Riboflavin kinase (FMN1).